A 215-amino-acid chain; its full sequence is MSKTIHYQKTHFITSAPDIRHLPEDEGIEVAFAGRSNAGKSSALNRLTNQKSLAKTSKTPGRTQLINLFKVEENCHIVDLPGYGFAQVPLEMKKKWQKSLGEYLQKRQCLQGLVVLMDIRHPLKDIDQQLVFWAVDQNIPVQILLTKADKLKSGARKAQVLKVREAAVDFGGEVEVDAFSSLKGIGVDKLRAKLDEWFAPAFELDDEFIEDLDAE.

Residues 26-200 (EGIEVAFAGR…RAKLDEWFAP (175 aa)) enclose the EngB-type G domain. GTP-binding positions include 34–41 (GRSNAGKS), 61–65 (GRTQL), 79–82 (DLPG), 146–149 (TKAD), and 179–181 (FSS). Residues S41 and T63 each coordinate Mg(2+).

This sequence belongs to the TRAFAC class TrmE-Era-EngA-EngB-Septin-like GTPase superfamily. EngB GTPase family. Mg(2+) serves as cofactor.

Its function is as follows. Necessary for normal cell division and for the maintenance of normal septation. This chain is Probable GTP-binding protein EngB, found in Aliivibrio fischeri (strain ATCC 700601 / ES114) (Vibrio fischeri).